We begin with the raw amino-acid sequence, 154 residues long: Myoglobin (154 aa).

Residues 2–148 enclose the Globin domain; the sequence is GLSDGEWQLV…FRNDIAAKYK (147 aa). Ser4 carries the post-translational modification Phosphoserine. His65 is a nitrite binding site. Residue His65 participates in O2 binding. At Thr68 the chain carries Phosphothreonine. His94 contributes to the heme b binding site.

This sequence belongs to the globin family. Monomeric.

It is found in the cytoplasm. Its subcellular location is the sarcoplasm. The catalysed reaction is Fe(III)-heme b-[protein] + nitric oxide + H2O = Fe(II)-heme b-[protein] + nitrite + 2 H(+). The enzyme catalyses H2O2 + AH2 = A + 2 H2O. Monomeric heme protein which primary function is to store oxygen and facilitate its diffusion within muscle tissues. Reversibly binds oxygen through a pentacoordinated heme iron and enables its timely and efficient release as needed during periods of heightened demand. Depending on the oxidative conditions of tissues and cells, and in addition to its ability to bind oxygen, it also has a nitrite reductase activity whereby it regulates the production of bioactive nitric oxide. Under stress conditions, like hypoxia and anoxia, it also protects cells against reactive oxygen species thanks to its pseudoperoxidase activity. In Proechimys guairae (Guaira spiny rat), this protein is Myoglobin (MB).